A 141-amino-acid polypeptide reads, in one-letter code: Hemoglobin subunit alpha-2 (141 aa).

Ser1 bears the N-acetylserine mark. Residues 1–141 enclose the Globin domain; it reads SLSTKDKETV…LARALSEKYR (141 aa). His59 provides a ligand contact to O2. Position 88 (His88) interacts with heme b.

The protein belongs to the globin family. As to quaternary structure, hb2 is a heterotetramer of two alpha-2 chains and two beta chains. As to expression, red blood cells.

Its function is as follows. Involved in oxygen transport from gills to the various peripheral tissues. The polypeptide is Hemoglobin subunit alpha-2 (hba2) (Notothenia angustata (Rockcod)).